The primary structure comprises 420 residues: Dynein axonemal assembly factor 4 (420 aa).

Positions 3-87 (LQVSDYSWQQ…KEAAMWETLS (85 aa)) constitute a CS domain. Residues 7 to 103 (DYSWQQTKTA…EMMQRIREKS (97 aa)) form a mediates interaction with ESR1 and STUB1 region. TPR repeat units follow at residues 290–323 (PEWLKDKGNKLFATENYLAAINAYNLAIRLNNKM), 324–357 (PLLYLNRAACHLKLKNLHKAIEDSSKALELLMPP), and 366–399 (MKAHVRRGTAFCQLELYVEGLQDYEAALKIDPSN).

As to quaternary structure, interacts with ZMYND10. Interacts with STUB1. Interacts with ESR1 and ESR2. Interacts with DNAAF2. Interacts with CCT3, CCT4, CCT5 and CCT8. Interacts with DNAAF6/PIH1D3.

It localises to the nucleus. The protein localises to the cytoplasm. Its subcellular location is the cell projection. The protein resides in the neuron projection. It is found in the dynein axonemal particle. Functionally, involved in neuronal migration during development of the cerebral neocortex. May regulate the stability and proteasomal degradation of the estrogen receptors that play an important role in neuronal differentiation, survival and plasticity. Axonemal dynein assembly factor required for ciliary motility. The polypeptide is Dynein axonemal assembly factor 4 (Pan paniscus (Pygmy chimpanzee)).